A 389-amino-acid polypeptide reads, in one-letter code: Probable protein phosphatase 2C 47 (389 aa).

Residues 76–346 enclose the PPM-type phosphatase domain; that stretch reads RSGSFADIGP…DNLTVIVVCF (271 aa). 4 residues coordinate Mn(2+): aspartate 120, glycine 121, aspartate 294, and aspartate 337.

The protein belongs to the PP2C family. The cofactor is Mg(2+). Mn(2+) serves as cofactor.

It catalyses the reaction O-phospho-L-seryl-[protein] + H2O = L-seryl-[protein] + phosphate. It carries out the reaction O-phospho-L-threonyl-[protein] + H2O = L-threonyl-[protein] + phosphate. The protein is Probable protein phosphatase 2C 47 of Oryza sativa subsp. japonica (Rice).